We begin with the raw amino-acid sequence, 67 residues long: Beta-defensin 123 (67 aa).

An N-terminal signal peptide occupies residues 1-20 (MKLLLLTLTVLLLLSQLTPG). 3 disulfide bridges follow: C25–C52, C32–C46, and C36–C53.

The protein belongs to the beta-defensin family. In terms of tissue distribution, abundant expression in the male reproductive tract only. Expressed abundantly in testis, while expression in epididymis decreased gradually from caput to cauda.

The protein localises to the secreted. In terms of biological role, has antibacterial activity. The sequence is that of Beta-defensin 123 (DEFB123) from Macaca mulatta (Rhesus macaque).